Consider the following 229-residue polypeptide: Non-structural protein P8 (229 aa).

2 helical membrane passes run 119 to 139 (IIHM…VCTL) and 162 to 182 (SLNP…MVCA).

This sequence belongs to the orbivirus NS3 family. In terms of assembly, forms homooligomers via coiled-coil motif. Interacts with host OPTN; this interaction inhibits innate immune response.

The protein localises to the host cell membrane. The protein resides in the host Golgi apparatus. In terms of biological role, plays a role in the inhibition of host innate immune response. Interacts with host OPTN and thus inhibits the recruitment of TBK1 to the host Golgi apparatus. In turn, downstream partner IRF3 cannot be activated and IFN-beta production is impaired. Facilitates viral particle release either by increasing plasma membrane permeability through a viroporin-like activity or by viral budding. The sequence is that of Non-structural protein P8 (Segment-10) from Bluetongue virus 1 (isolate Australia) (BTV 1).